The sequence spans 348 residues: Neuronal growth regulator 1 (348 aa).

Positions 1 to 31 are cleaved as a signal peptide; that stretch reads MVLLAQGACCSNQWLAAVLLSLCSCLPAGQS. Ig-like C2-type domains are found at residues 32-128, 133-215, and 219-307; these read VDFP…VHLT, PKIY…RVVV, and PTIQ…LPLN. Cys54 and Cys112 form a disulfide bridge. Residues Asn67 and Asn149 are each glycosylated (N-linked (GlcNAc...) asparagine). 2 disulfides stabilise this stretch: Cys154–Cys197 and Cys239–Cys291. Phosphotyrosine is present on Tyr181. Residues Asn269, Asn280, Asn288, and Asn301 are each glycosylated (N-linked (GlcNAc...) asparagine). Gly318 is lipidated: GPI-anchor amidated glycine. Positions 319–348 are cleaved as a propeptide — removed in mature form; the sequence is SACDLFSCWSLALTLSSVISIFYLKNAILQ.

It belongs to the immunoglobulin superfamily. IgLON family. Glycosylated. As to expression, highly expressed in brain.

Its subcellular location is the cell membrane. May be involved in cell-adhesion. May function as a trans-neural growth-promoting factor in regenerative axon sprouting in the mammalian brain. This chain is Neuronal growth regulator 1 (Negr1), found in Rattus norvegicus (Rat).